A 169-amino-acid chain; its full sequence is Ribosome maturation factor RimM (169 aa).

Residues 93–167 (PENSFFISDI…KISVILPKGL (75 aa)) enclose the PRC barrel domain.

The protein belongs to the RimM family. As to quaternary structure, binds ribosomal protein uS19.

It is found in the cytoplasm. Its function is as follows. An accessory protein needed during the final step in the assembly of 30S ribosomal subunit, possibly for assembly of the head region. Essential for efficient processing of 16S rRNA. May be needed both before and after RbfA during the maturation of 16S rRNA. It has affinity for free ribosomal 30S subunits but not for 70S ribosomes. In Ruminiclostridium cellulolyticum (strain ATCC 35319 / DSM 5812 / JCM 6584 / H10) (Clostridium cellulolyticum), this protein is Ribosome maturation factor RimM.